A 314-amino-acid polypeptide reads, in one-letter code: Olfactory receptor 1C1 (314 aa).

At 1 to 25 (MEKRNLTVVREFVLLGLPSSAEQQH) the chain is on the extracellular side. The chain crosses the membrane as a helical span at residues 26–49 (LLSVLFLCMYLATTLGNMLIIATI). The Cytoplasmic segment spans residues 50 to 57 (GFDSHLHS). Residues 58-79 (PMYFFLSNLAFVDICFTSTTVP) traverse the membrane as a helical segment. The Extracellular segment spans residues 80-100 (QMVVNILTGTKTISFAGCLTQ). An intrachain disulfide couples cysteine 97 to cysteine 189. A helical membrane pass occupies residues 101–120 (LFFFVSFVNMDSLLLCVMAY). The Cytoplasmic segment spans residues 121–139 (DRYVAICHPLHYTARMNLC). Residues 140–158 (LCVQLVAGLWLVTYLHALL) form a helical membrane-spanning segment. The Extracellular portion of the chain corresponds to 159-195 (HTVLIAQLSFCASNIIHHFFCDLNPLLQLSCSDVSFN). Residues 196–219 (VMIIFAVGGLLALTPLVCILVSYG) form a helical membrane-spanning segment. Topologically, residues 220–236 (LIFSTVLKITSTQGKQR) are cytoplasmic. The chain crosses the membrane as a helical span at residues 237–259 (AVSTCSCHLSVVVLFYGTAIAVY). Residues 260 to 272 (FSPSSPHMPESDT) are Extracellular-facing. The helical transmembrane segment at 273–292 (LSTIMYSMVAPMLNPFIYTL) threads the bilayer. The Cytoplasmic segment spans residues 293 to 314 (RNRDMKRGLQKMLLKCTVFQQQ).

This sequence belongs to the G-protein coupled receptor 1 family.

It is found in the cell membrane. Its function is as follows. Odorant receptor. The protein is Olfactory receptor 1C1 (OR1C1) of Homo sapiens (Human).